Reading from the N-terminus, the 99-residue chain is RNA-binding protein Hfq (99 aa).

Residues 9–68 (DPFLNALRRERVPVSIYLVNGIKLQGQIESFDQFVILLKNTVSQMVYKHAISTVVPSRPV) form the Sm domain. The tract at residues 64-99 (PSRPVSHHSNNPGGSNNYHGSNTTAQQQSQDADDAE) is disordered. Residues 70–93 (HHSNNPGGSNNYHGSNTTAQQQSQ) are compositionally biased toward low complexity.

The protein belongs to the Hfq family. Homohexamer.

Its function is as follows. RNA chaperone that binds small regulatory RNA (sRNAs) and mRNAs to facilitate mRNA translational regulation in response to envelope stress, environmental stress and changes in metabolite concentrations. Also binds with high specificity to tRNAs. This Pectobacterium atrosepticum (strain SCRI 1043 / ATCC BAA-672) (Erwinia carotovora subsp. atroseptica) protein is RNA-binding protein Hfq.